A 155-amino-acid polypeptide reads, in one-letter code: Transcription antitermination protein NusB (155 aa).

This sequence belongs to the NusB family.

Its function is as follows. Involved in transcription antitermination. Required for transcription of ribosomal RNA (rRNA) genes. Binds specifically to the boxA antiterminator sequence of the ribosomal RNA (rrn) operons. The polypeptide is Transcription antitermination protein NusB (Halorhodospira halophila (strain DSM 244 / SL1) (Ectothiorhodospira halophila (strain DSM 244 / SL1))).